We begin with the raw amino-acid sequence, 297 residues long: tRNA pseudouridine synthase B (297 aa).

The Nucleophile role is filled by Asp39.

The protein belongs to the pseudouridine synthase TruB family. Type 1 subfamily.

The enzyme catalyses uridine(55) in tRNA = pseudouridine(55) in tRNA. In terms of biological role, responsible for synthesis of pseudouridine from uracil-55 in the psi GC loop of transfer RNAs. This Lactobacillus johnsonii (strain CNCM I-12250 / La1 / NCC 533) protein is tRNA pseudouridine synthase B.